Consider the following 58-residue polypeptide: Basic phospholipase A2 homolog PocTX (58 aa).

A disulfide bridge connects residues Cys-29 and Cys-45.

As to expression, expressed by the venom gland.

Its subcellular location is the secreted. Functionally, wasp venom phospholipase A2 homolog that lacks enzymatic activity. The chain is Basic phospholipase A2 homolog PocTX from Polybia occidentalis (Paper wasp).